Consider the following 311-residue polypeptide: Olfactory receptor 4K1 (311 aa).

Topologically, residues 1–25 (MAHTNESMVSEFVLLGLSNSWGLQL) are extracellular. Residue Asn5 is glycosylated (N-linked (GlcNAc...) asparagine). Residues 26 to 49 (FFFAIFSIVYVTSVLGNVLIIVII) traverse the membrane as a helical segment. Residues 50-57 (SFDSHLNS) lie on the Cytoplasmic side of the membrane. Residues 58–79 (PMYFLLSNLSFIDICQSNFATP) form a helical membrane-spanning segment. Residues 80–100 (KMLVDFFIERKTISFEGCMAQ) are Extracellular-facing. A disulfide bridge links Cys97 with Cys189. A helical transmembrane segment spans residues 101–120 (IFVLHSFVGSEMMLLVAMAY). The Cytoplasmic segment spans residues 121-139 (DRFIAICKPLHYSTIMNRR). Residues 140–158 (LCVIFVSISWAVGVLHSVS) form a helical membrane-spanning segment. The Extracellular segment spans residues 159 to 195 (HLAFTVDLPFCGPNEVDSFFCDLPLVIELACMDTYEM). Residues 196–219 (EIMTLTNSGLISLSCFLALIISYT) traverse the membrane as a helical segment. The Cytoplasmic segment spans residues 220–235 (IILIGVRCRSSSGSSK). A helical transmembrane segment spans residues 236–258 (ALSTLTAHITVVILFFGPCIYFY). At 259–269 (IWPFSRLPVDK) the chain is on the extracellular side. A helical transmembrane segment spans residues 270 to 289 (FLSVFYTVCTPLLNPIIYSL). Topologically, residues 290–311 (RNEDVKAAMWKLRNRHVNSWKN) are cytoplasmic.

This sequence belongs to the G-protein coupled receptor 1 family.

The protein resides in the cell membrane. Functionally, odorant receptor. The chain is Olfactory receptor 4K1 (OR4K1) from Homo sapiens (Human).